The primary structure comprises 243 residues: Small ribosomal subunit protein uS3 (243 aa).

Residues 39–110 (IRKFIHKKYG…QVRINVVEVE (72 aa)) form the KH type-2 domain. The disordered stretch occupies residues 217 to 243 (QQLPVGATPRRRAGRRPQQFEDRSNEG). Positions 234–243 (QQFEDRSNEG) are enriched in basic and acidic residues.

The protein belongs to the universal ribosomal protein uS3 family. Part of the 30S ribosomal subunit. Forms a tight complex with proteins S10 and S14.

Binds the lower part of the 30S subunit head. Binds mRNA in the 70S ribosome, positioning it for translation. In Synechococcus sp. (strain WH7803), this protein is Small ribosomal subunit protein uS3.